Consider the following 236-residue polypeptide: Ribosome assembly factor mrt4 (236 aa).

It belongs to the universal ribosomal protein uL10 family. Associates with the pre-60S ribosomal particle.

It is found in the nucleus. It localises to the nucleolus. Its subcellular location is the cytoplasm. Component of the ribosome assembly machinery. Nuclear paralog of the ribosomal protein P0, it binds pre-60S subunits at an early stage of assembly in the nucleolus, and is replaced by P0 in cytoplasmic pre-60S subunits and mature 80S ribosomes. The protein is Ribosome assembly factor mrt4 of Eremothecium gossypii (strain ATCC 10895 / CBS 109.51 / FGSC 9923 / NRRL Y-1056) (Yeast).